The chain runs to 177 residues: Platelet glycoprotein IX (177 aa).

The first 16 residues, Met1–Ala16, serve as a signal peptide directing secretion. The 35-residue stretch at Thr17–Ala51 folds into the LRRNT domain. At Thr17–Gly147 the chain is on the extracellular side. Residue Asn60 is glycosylated (N-linked (GlcNAc...) asparagine). An LRR repeat occupies Asn60–Thr83. Residues Asn85–Trp137 form the LRRCT domain. Residues Val148–Leu168 traverse the membrane as a helical segment. Residues Leu169–Asp177 are Cytoplasmic-facing.

In terms of assembly, two GP-Ib beta are disulfide-linked to one GP-Ib alpha. GP-IX is complexed with the GP-Ib heterodimer via a non covalent linkage.

The protein resides in the membrane. The GPIb-V-IX complex functions as the vWF receptor and mediates vWF-dependent platelet adhesion to blood vessels. The adhesion of platelets to injured vascular surfaces in the arterial circulation is a critical initiating event in hemostasis. GP-IX may provide for membrane insertion and orientation of GP-Ib. This is Platelet glycoprotein IX (GP9) from Homo sapiens (Human).